The chain runs to 228 residues: RNA-free ribonuclease P (228 aa).

Belongs to the HARP family.

It carries out the reaction Endonucleolytic cleavage of RNA, removing 5'-extranucleotides from tRNA precursor.. In terms of biological role, RNA-free RNase P that catalyzes the removal of the 5'-leader sequence from pre-tRNA to produce the mature 5'-terminus. This is RNA-free ribonuclease P from Methanopyrus kandleri (strain AV19 / DSM 6324 / JCM 9639 / NBRC 100938).